The sequence spans 441 residues: Ribosomal protein uS12 methylthiotransferase RimO (441 aa).

The MTTase N-terminal domain maps to 8–118; sequence PKIGFVSLGC…VLQHVHHYVP (111 aa). 6 residues coordinate [4Fe-4S] cluster: Cys17, Cys53, Cys82, Cys150, Cys154, and Cys157. Residues 136 to 373 form the Radical SAM core domain; that stretch reads LTPRHYAYLK…MQLQQQISAE (238 aa). Residues 376 to 441 form the TRAM domain; it reads QEKVGREILV…DEYDLWGSRV (66 aa).

The protein belongs to the methylthiotransferase family. RimO subfamily. It depends on [4Fe-4S] cluster as a cofactor.

Its subcellular location is the cytoplasm. The enzyme catalyses L-aspartate(89)-[ribosomal protein uS12]-hydrogen + (sulfur carrier)-SH + AH2 + 2 S-adenosyl-L-methionine = 3-methylsulfanyl-L-aspartate(89)-[ribosomal protein uS12]-hydrogen + (sulfur carrier)-H + 5'-deoxyadenosine + L-methionine + A + S-adenosyl-L-homocysteine + 2 H(+). Catalyzes the methylthiolation of an aspartic acid residue of ribosomal protein uS12. This Salmonella paratyphi B (strain ATCC BAA-1250 / SPB7) protein is Ribosomal protein uS12 methylthiotransferase RimO.